The chain runs to 720 residues: DNA replication licensing factor mcm7-B (720 aa).

The segment at 183 to 210 adopts a C4-type zinc-finger fold; it reads CDQCGAETYQPIQSPTFMPLIMCPSREC. An MCM domain is found at 331 to 537; it reads FYEKLAASIA…NDLRLAQHIT (207 aa). The ATP site is built by Y344, G383, A385, K386, S387, N488, R513, and R603. The Arginine finger signature appears at 512–515; it reads SRFD.

The protein belongs to the MCM family. In terms of assembly, component of the mcm2-7 complex (RLF-M). The complex forms a toroidal hexameric ring with the proposed subunit order mcm2-mcm6-mcm4-mcm7-mcm3-mcm5. The heterodimer of mmcm3/mcm5 interacts with mcm4, mmcm6, mcm7 and weakly with mcm2. The N-terminus is required for interaction with mmcm3, though this interaction may not be direct, and remains in a complex with mmcm3 throughout the cell cycle. Begins to associate with zmcm6 at the neurula stage. Component of the replisome complex. Component of the CMG helicase complex, composed of the mcm2-7 complex, the GINS complex and cdc45. Post-translationally, ubiquitinated by traip when forks converge following formation of DNA interstrand cross-links. Short ubiquitin chains on mcm7 promote recruitment of DNA glycosylase neil3. If the interstrand cross-link cannot be cleaved by neil3, the ubiquitin chains continue to grow on mcm7, promoting the unloading of the CMG helicase complex by the vcp/p97 ATPase.

It localises to the nucleus. Its subcellular location is the chromosome. The catalysed reaction is ATP + H2O = ADP + phosphate + H(+). Functionally, acts as a component of the mcm2-7 complex (mcm complex) which is the putative replicative helicase essential for 'once per cell cycle' DNA replication initiation and elongation in eukaryotic cells. The active ATPase sites in the mcm2-7 ring are formed through the interaction surfaces of two neighboring subunits such that a critical structure of a conserved arginine finger motif is provided in trans relative to the ATP-binding site of the Walker A box of the adjacent subunit. The six ATPase active sites, however, are likely to contribute differentially to the complex helicase activity. The existence of maternal and zygotic forms of mcm3 and mcm6 suggests that specific forms of mcm2-7 complexes may be used during different stages of development. The sequence is that of DNA replication licensing factor mcm7-B (mcm7-b) from Xenopus laevis (African clawed frog).